The following is a 429-amino-acid chain: Transcriptional adapter 3 (429 aa).

Residues 41-70 are a coiled coil; it reads IEELDTLQLELETLLSSASRRLRALEEQRQ. Disordered stretches follow at residues 86–132, 208–257, and 274–308; these read KLEK…TKVQ, EERR…PFGP, and PMED…HTRS. Composition is skewed to basic and acidic residues over residues 208 to 221 and 230 to 249; these read EERR…DKKK and LDAK…HEPP. A coiled-coil region spans residues 364-404; the sequence is LLKLAREEMRKQELRQRVRVADNEVMEAFRRIMAARQKKRT.

Belongs to the NGG1 family.

The protein localises to the nucleus. Functionally, functions as a component of the PCAF complex. The PCAF complex is capable of efficiently acetylating histones in a nucleosomal context. The polypeptide is Transcriptional adapter 3 (tada3) (Danio rerio (Zebrafish)).